A 213-amino-acid polypeptide reads, in one-letter code: Imidazole glycerol phosphate synthase subunit HisH (213 aa).

Positions 6 to 213 (LVTVIDYGMG…FKNFLNWNGQ (208 aa)) constitute a Glutamine amidotransferase type-1 domain. Cys-86 acts as the Nucleophile in catalysis. Catalysis depends on residues His-192 and Glu-194.

Heterodimer of HisH and HisF.

It localises to the cytoplasm. The catalysed reaction is 5-[(5-phospho-1-deoxy-D-ribulos-1-ylimino)methylamino]-1-(5-phospho-beta-D-ribosyl)imidazole-4-carboxamide + L-glutamine = D-erythro-1-(imidazol-4-yl)glycerol 3-phosphate + 5-amino-1-(5-phospho-beta-D-ribosyl)imidazole-4-carboxamide + L-glutamate + H(+). The enzyme catalyses L-glutamine + H2O = L-glutamate + NH4(+). Its pathway is amino-acid biosynthesis; L-histidine biosynthesis; L-histidine from 5-phospho-alpha-D-ribose 1-diphosphate: step 5/9. IGPS catalyzes the conversion of PRFAR and glutamine to IGP, AICAR and glutamate. The HisH subunit catalyzes the hydrolysis of glutamine to glutamate and ammonia as part of the synthesis of IGP and AICAR. The resulting ammonia molecule is channeled to the active site of HisF. This Hydrogenovibrio crunogenus (strain DSM 25203 / XCL-2) (Thiomicrospira crunogena) protein is Imidazole glycerol phosphate synthase subunit HisH.